Consider the following 111-residue polypeptide: Ribonuclease P protein component (111 aa).

This sequence belongs to the RnpA family. As to quaternary structure, consists of a catalytic RNA component (M1 or rnpB) and a protein subunit.

The catalysed reaction is Endonucleolytic cleavage of RNA, removing 5'-extranucleotides from tRNA precursor.. In terms of biological role, RNaseP catalyzes the removal of the 5'-leader sequence from pre-tRNA to produce the mature 5'-terminus. It can also cleave other RNA substrates such as 4.5S RNA. The protein component plays an auxiliary but essential role in vivo by binding to the 5'-leader sequence and broadening the substrate specificity of the ribozyme. This Streptococcus thermophilus (strain CNRZ 1066) protein is Ribonuclease P protein component.